Here is a 292-residue protein sequence, read N- to C-terminus: Claudin-23 (292 aa).

Over 1 to 3 (MRT) the chain is Cytoplasmic. The chain crosses the membrane as a helical span at residues 4–24 (PVVMTLGMVLAPCGLLLNLTG). The Extracellular portion of the chain corresponds to 25–81 (TLAPGWRLVKGFLNQPVDVELYQGLWDMCREQSSRERECGQTDQWGYFEAQPVLVAR). The chain crosses the membrane as a helical span at residues 82 to 102 (ALMVTSLAATVLGLLLASLGV). Topologically, residues 103–110 (RCWQDEPN) are cytoplasmic. The chain crosses the membrane as a helical span at residues 111-131 (FVLAGLSGVVLFVAGLLGLIP). Over 132 to 160 (VSWYNHFLGDRDVLPAPASPVTVQVSYSL) the chain is Extracellular. The helical transmembrane segment at 161–181 (VLGYLGSCLLLLGGFSLALSF) threads the bilayer. Over 182-292 (APWCDERCRR…DSSLPCDSDL (111 aa)) the chain is Cytoplasmic. The interval 222 to 292 (KYYSDGQHRP…DSSLPCDSDL (71 aa)) is disordered. Polar residues predominate over residues 273–282 (DAPSCSTHPC).

The protein belongs to the claudin family. In terms of tissue distribution, expressed in germinal center B-cells, placenta, stomach as well as in colon tumor.

The protein localises to the cell junction. It is found in the tight junction. The protein resides in the cell membrane. Its function is as follows. Plays a major role in tight junction-specific obliteration of the intercellular space, through calcium-independent cell-adhesion activity. The protein is Claudin-23 (CLDN23) of Homo sapiens (Human).